The chain runs to 1047 residues: UPF0182 protein Mlut_14990 (1047 aa).

Composition is skewed to gly residues over residues 1–27 and 49–59; these read MSFGQGGGGPFGGPPRDGGGTAGGQSG and GPGGPFGGGGS. The tract at residues 1 to 66 is disordered; the sequence is MSFGQGGGGP…GGSSAARGRG (66 aa). The next 7 helical transmembrane spans lie at 71-91, 114-134, 168-188, 214-234, 266-286, 314-334, and 341-361; these read PSALVLTIIAVAVLVGLFVVF, VLAKGALFLIAGLGMALAVWL, LVFLGVPLVLGVFAGSTAMNG, FFMATLPFLTLVVGYLISVVL, AHIGITLAVFLLLQGVNFWLN, AILAVTAVIVAGLFVWTVVSG, and IGTAVLVITALVVGTAYPFIV. Disordered stretches follow at residues 544-568, 941-965, and 1007-1047; these read GAPAVERDRPQTADSQEDTAYTFSG, GDSGAVTPEEKQAEAPAPGEKPTAP, and EALK…TPSG. Positions 555–565 are enriched in polar residues; that stretch reads TADSQEDTAYT. Residues 1015 to 1037 are compositionally biased toward low complexity; the sequence is ADDALGGDAPAQEQAPAEASPAP. Pro residues predominate over residues 1038 to 1047; sequence SSSPSPTPSG.

This sequence belongs to the UPF0182 family.

It localises to the cell membrane. The polypeptide is UPF0182 protein Mlut_14990 (Micrococcus luteus (strain ATCC 4698 / DSM 20030 / JCM 1464 / CCM 169 / CCUG 5858 / IAM 1056 / NBRC 3333 / NCIMB 9278 / NCTC 2665 / VKM Ac-2230) (Micrococcus lysodeikticus)).